Reading from the N-terminus, the 366-residue chain is Phospho-N-acetylmuramoyl-pentapeptide-transferase (366 aa).

The next 10 membrane-spanning stretches (helical) occupy residues 3 to 23 (QIFIAGAVAFLVSVFLTPVLI), 54 to 74 (GIAVLAGIVFGYLIAVLVGLV), 80 to 100 (PGVSGWLVLGLTLALGGLGFA), 120 to 140 (LVGQLVTAIVFGLLILQFPNA), 161 to 181 (IAIGPAIVGMILFLIFIYLVI), 197 to 217 (LASGVTAIVMGTYVLITFWQF), 238 to 258 (LSMLASAGLGACLGFLWWNAA), 262 to 282 (IFMGDTGSLALGGLVAGLSVT), 288 to 308 (LMILVGIIFVIEAASVVIQVV), and 341 to 361 (FWLLAALAAMSGFAVFYAEWL).

The protein belongs to the glycosyltransferase 4 family. MraY subfamily. The cofactor is Mg(2+).

It is found in the cell membrane. It catalyses the reaction UDP-N-acetyl-alpha-D-muramoyl-L-alanyl-gamma-D-glutamyl-meso-2,6-diaminopimeloyl-D-alanyl-D-alanine + di-trans,octa-cis-undecaprenyl phosphate = di-trans,octa-cis-undecaprenyl diphospho-N-acetyl-alpha-D-muramoyl-L-alanyl-D-glutamyl-meso-2,6-diaminopimeloyl-D-alanyl-D-alanine + UMP. It functions in the pathway cell wall biogenesis; peptidoglycan biosynthesis. Functionally, catalyzes the initial step of the lipid cycle reactions in the biosynthesis of the cell wall peptidoglycan: transfers peptidoglycan precursor phospho-MurNAc-pentapeptide from UDP-MurNAc-pentapeptide onto the lipid carrier undecaprenyl phosphate, yielding undecaprenyl-pyrophosphoryl-MurNAc-pentapeptide, known as lipid I. In Corynebacterium jeikeium (strain K411), this protein is Phospho-N-acetylmuramoyl-pentapeptide-transferase.